A 669-amino-acid polypeptide reads, in one-letter code: MENPSALPIKLQPSNLRPIAYRILSKKHGLNIQTDALKLLTDAVSYKFGFDWKSTQSQQFLEEIAKIWKKQDRGIFIDGPGLKQVIKELSDRNTNQISTRNGSADNLAKKAERSDTLVDNDAENEPVNNAENTLNWQDYFKVINPDEQPNYKYDKHRKQLSFIPSTNAKRLANNLNSNVDYFNNRYHLISDRLSRNENFQKPSFSSISSISKSLSHNNKTNEITLIKNVLGRDGSKFILFGLLSKNANDDFILEDSTDHIELNLTQAYKTEGSFYCPGMFVIVEGIYSASGGSMSNANVIGGCFHVSNIGHPPAERRELSMENYGNLDFMGINRDNDTNNNDNHILRVNKSLKKKLVSLEKTLVNHKLIILGSDCFLDDLKILDGIKKLFGKIESSLIDDETNQPLVIVLIGSFTSNPLTPTNSSVANVSNTENYKSNFDNLSNILSNFPNIVQKVKIALIPGINDPWQSSHSLGGSNLNAFPQRSIPKIFTNRLERLLPKGNLIAGWNPLRINYLSQEIVLMKDDIINKFKRNDIIFSNDLELEQLKLQKDKNDDGLIHATDINTKEPHISPKIKQARKLVKTILDQGNLQPFLKDIRIINTNFDYSLRIEPLPTILILNDATFPTFEVTYNGCKVINTGKLVGNNRKLSFVEYFPSGKKFEFKEVYF.

A disordered region spans residues 96–115; that stretch reads QISTRNGSADNLAKKAERSD.

The protein belongs to the DNA polymerase epsilon subunit B family. In terms of assembly, heterotetramer. Consists of four subunits: POL2, DPB2, DPB3 and DPB4.

Its subcellular location is the nucleus. Its function is as follows. As accessory component of the DNA polymerase epsilon (DNA polymerase II) participates in chromosomal DNA replication. The chain is DNA polymerase epsilon subunit B (DPB2) from Debaryomyces hansenii (strain ATCC 36239 / CBS 767 / BCRC 21394 / JCM 1990 / NBRC 0083 / IGC 2968) (Yeast).